The primary structure comprises 328 residues: Cytochrome c biogenesis protein CcsA (328 aa).

The next 8 membrane-spanning stretches (helical) occupy residues 13–33 (ISFS…LVNL), 46–66 (GIII…IFSG), 73–93 (LYES…ISFF), 101–121 (LNAI…SGLL), 146–166 (MVLG…LLVI), 234–254 (IISL…VWAN), 263–283 (WDPK…YLHI), and 295–315 (AIVA…VNLL).

It belongs to the CcmF/CycK/Ccl1/NrfE/CcsA family. As to quaternary structure, may interact with Ccs1.

It is found in the plastid. It localises to the chloroplast thylakoid membrane. Functionally, required during biogenesis of c-type cytochromes (cytochrome c6 and cytochrome f) at the step of heme attachment. The chain is Cytochrome c biogenesis protein CcsA from Aethionema grandiflorum (Persian stone-cress).